The sequence spans 488 residues: Glutamate--tRNA ligase (488 aa).

A 'HIGH' region motif is present at residues 9-19; sequence PSPTGFLHIGG. Residues Cys112, Cys114, Cys139, and His141 each coordinate Zn(2+). The 'KMSKS' region motif lies at 256–260; the sequence is KLSKR. Residue Lys259 coordinates ATP.

This sequence belongs to the class-I aminoacyl-tRNA synthetase family. Glutamate--tRNA ligase type 1 subfamily. As to quaternary structure, monomer. It depends on Zn(2+) as a cofactor.

Its subcellular location is the cytoplasm. It catalyses the reaction tRNA(Glu) + L-glutamate + ATP = L-glutamyl-tRNA(Glu) + AMP + diphosphate. Its function is as follows. Catalyzes the attachment of glutamate to tRNA(Glu) in a two-step reaction: glutamate is first activated by ATP to form Glu-AMP and then transferred to the acceptor end of tRNA(Glu). In Elusimicrobium minutum (strain Pei191), this protein is Glutamate--tRNA ligase.